The following is a 258-amino-acid chain: MSDLKAAALRALKLMDLTTLNDDDTDAKVIALCHDAKTPVGNTAAICIYPRFIPIAKKTLREQGTPEVRIATVTNFPYGNDDIEIAVAETKAAVAYGADEVDVVFPYRALMAGDEKVGFELVKQCKEACGDILLKVIIETGELKEEALIKKASQICIEAGADFIKTSTGKVPVNATPEYARMMLEVIRDMGVAEKVGFKPAGGVRTAEDAAAYLAMADDILGSEWADNMHYRFGASSLLTNLLNTLEVTDQVADPAAY.

Asp102 serves as the catalytic Proton donor/acceptor. Lys165 acts as the Schiff-base intermediate with acetaldehyde in catalysis. Lys199 functions as the Proton donor/acceptor in the catalytic mechanism.

The protein belongs to the DeoC/FbaB aldolase family. DeoC type 2 subfamily.

It is found in the cytoplasm. It catalyses the reaction 2-deoxy-D-ribose 5-phosphate = D-glyceraldehyde 3-phosphate + acetaldehyde. The protein operates within carbohydrate degradation; 2-deoxy-D-ribose 1-phosphate degradation; D-glyceraldehyde 3-phosphate and acetaldehyde from 2-deoxy-alpha-D-ribose 1-phosphate: step 2/2. Catalyzes a reversible aldol reaction between acetaldehyde and D-glyceraldehyde 3-phosphate to generate 2-deoxy-D-ribose 5-phosphate. The chain is Deoxyribose-phosphate aldolase from Vibrio vulnificus (strain CMCP6).